The primary structure comprises 333 residues: Phosphoribosylformylglycinamidine cyclo-ligase (333 aa).

This sequence belongs to the AIR synthase family.

Its subcellular location is the cytoplasm. The catalysed reaction is 2-formamido-N(1)-(5-O-phospho-beta-D-ribosyl)acetamidine + ATP = 5-amino-1-(5-phospho-beta-D-ribosyl)imidazole + ADP + phosphate + H(+). It participates in purine metabolism; IMP biosynthesis via de novo pathway; 5-amino-1-(5-phospho-D-ribosyl)imidazole from N(2)-formyl-N(1)-(5-phospho-D-ribosyl)glycinamide: step 2/2. The chain is Phosphoribosylformylglycinamidine cyclo-ligase from Methanosarcina acetivorans (strain ATCC 35395 / DSM 2834 / JCM 12185 / C2A).